Here is a 166-residue protein sequence, read N- to C-terminus: MFAYNHKTLHVCLRLISLRNCSNTWTFVPYANSNRGLNINQQLKLFNRRSKIALSSFIIPTSVDILVKVAGFQRYIVNVEFSNVQSYFRYYNYISLYFVTHSKVPLNRLPNSMIPYTVFAHFDIVPYTTYSILTKYRCAQDKEREIVGLINASQSKLRYKFCGLRN.

This is an uncharacterized protein from Schizosaccharomyces pombe (strain 972 / ATCC 24843) (Fission yeast).